The primary structure comprises 199 residues: Urease accessory protein UreG (199 aa).

8–15 (GPVGSGKT) provides a ligand contact to GTP.

Belongs to the SIMIBI class G3E GTPase family. UreG subfamily. As to quaternary structure, homodimer. UreH, UreF and UreG form a complex that acts as a GTP-hydrolysis-dependent molecular chaperone, activating the urease apoprotein by helping to assemble the nickel containing metallocenter of UreC. The UreE protein probably delivers the nickel.

It localises to the cytoplasm. In terms of biological role, facilitates the functional incorporation of the urease nickel metallocenter. This process requires GTP hydrolysis, probably effectuated by UreG. This Helicobacter pylori (strain G27) protein is Urease accessory protein UreG.